Here is a 310-residue protein sequence, read N- to C-terminus: MLDANKLQQAVDQAYTQFHSLNGGQNADYIPFLANVPGQLAAVAIVTSDGNVYSAGDSDYRFALESISKVCTLALALEDVGPQAVQDKIGADPTGLPFNSVIALELHGGKPLSPLVNAGAIATTSLINAENAEQRWQRILHIQQQLAGELVALSDEVNQSEQTTNFHNRAIAWLLYSAGYLYCDAMEACDVYTRQCSTLINTVELATLGATLAAGGVNPLTHKRVLQADNVPYILAEMMMEGLYGRSGDWAYRVGLPGKSGVGGGILAVVPGVMGIAAFSPPLDEEGNSVRGQKMVASVAKQLGYNVFKG.

The substrate site is built by Ser-66, Asn-117, Glu-161, Asn-168, Tyr-192, Tyr-244, and Val-262. N6-acetyllysine is present on Lys-294.

This sequence belongs to the glutaminase family. As to quaternary structure, homotetramer.

It carries out the reaction L-glutamine + H2O = L-glutamate + NH4(+). The sequence is that of Glutaminase 1 from Escherichia coli O157:H7.